Consider the following 2292-residue polypeptide: Protein Ycf2 (2292 aa).

1644 to 1651 contacts ATP; sequence GSIGTGRS.

The protein belongs to the Ycf2 family.

The protein localises to the plastid. Its subcellular location is the chloroplast stroma. Functionally, probable ATPase of unknown function. Its presence in a non-photosynthetic plant (Epifagus virginiana) and experiments in tobacco indicate that it has an essential function which is probably not related to photosynthesis. The protein is Protein Ycf2 of Morus indica (Mulberry).